The chain runs to 37 residues: Large ribosomal subunit protein bL36 (37 aa).

It belongs to the bacterial ribosomal protein bL36 family.

The sequence is that of Large ribosomal subunit protein bL36 from Symbiobacterium thermophilum (strain DSM 24528 / JCM 14929 / IAM 14863 / T).